The primary structure comprises 224 residues: PKHD-type hydroxylase Sbal195_0750 (224 aa).

One can recognise a Fe2OG dioxygenase domain in the interval 78–176; the sequence is QFYPPLFNRY…RTAAFMWLQS (99 aa). Fe cation contacts are provided by His-96, Asp-98, and His-157. Arg-167 provides a ligand contact to 2-oxoglutarate.

Fe(2+) is required as a cofactor. L-ascorbate serves as cofactor.

In Shewanella baltica (strain OS195), this protein is PKHD-type hydroxylase Sbal195_0750.